We begin with the raw amino-acid sequence, 622 residues long: Galactolipid galactosyltransferase SFR2, chloroplastic (622 aa).

At 1–3 (MEL) the chain is on the stromal side. The helical; Signal-anchor transmembrane segment at 4 to 24 (FALLIKVAGLLATVTVGANVV) threads the bilayer. The Cytoplasmic portion of the chain corresponds to 25 to 622 (SYSRFRRQNL…LHPALASPFD (598 aa)). Residues histidine 222, 266–267 (NE), tyrosine 377, glutamate 429, tryptophan 467, 474–475 (EW), and phenylalanine 483 contribute to the a beta-D-glucoside site. The active-site Proton donor is glutamate 267. Glutamate 429 functions as the Nucleophile in the catalytic mechanism.

This sequence belongs to the glycosyl hydrolase 1 family. As to expression, expressed in hypocotyls, cotyledons, stems, leaves, pedicels, sepals, anthers and pistils. Limited expression in roots. Not detected in petals or filaments.

The protein resides in the plastid. It is found in the chloroplast. Its subcellular location is the chloroplast outer membrane. The enzyme catalyses 2 a 1,2-diacyl-3-O-(beta-D-galactosyl)-sn-glycerol = a 1,2-diacyl-3-O-[beta-D-galactosyl-(1-&gt;6)-beta-D-galactosyl]-sn-glycerol + a 1,2-diacyl-sn-glycerol. Its activity is regulated as follows. Induced by MgCl(2). Functionally, glycosyl hydrolase family protein acting primarily as a highly specific galactosyltransferase. Synthesizes digalactosyldiacylglycerol from monogalactosyldiacylglycerol in the absence of UDP-galactose in vitro. Hydrolyzes o- and p-nitrophenyl beta-D-glucoside in vitro. Plays a role in freezing tolerance. May play a role in chloroplast protection. The chain is Galactolipid galactosyltransferase SFR2, chloroplastic from Arabidopsis thaliana (Mouse-ear cress).